Reading from the N-terminus, the 447-residue chain is Eukaryotic translation initiation factor 3 subunit E (447 aa).

Residues leucine 253–serine 421 form the PCI domain.

The protein belongs to the eIF-3 subunit E family. Component of the eukaryotic translation initiation factor 3 (eIF-3) complex.

The protein resides in the cytoplasm. Functionally, component of the eukaryotic translation initiation factor 3 (eIF-3) complex, which is involved in protein synthesis of a specialized repertoire of mRNAs and, together with other initiation factors, stimulates binding of mRNA and methionyl-tRNAi to the 40S ribosome. The eIF-3 complex specifically targets and initiates translation of a subset of mRNAs involved in cell proliferation. In Chaetomium globosum (strain ATCC 6205 / CBS 148.51 / DSM 1962 / NBRC 6347 / NRRL 1970) (Soil fungus), this protein is Eukaryotic translation initiation factor 3 subunit E.